A 330-amino-acid chain; its full sequence is MQSWVNKLWYQGHPLRFALWPLSLLFGFVTWLRRVLFSLGLKKAAKLPVPVIIVGNITVGGSGKTPTVIYLIELLRKHGLKPGVISRGYGVEIDGVRAVLSGDRADSVGDEPAMIVARTQVPMLVGAKRIDAANLLLSEFDVDIIISDDGLQHYQLARDIELVILDGERRLGNGMLLPAGPLREGPWRLQNVDHVIVNGGKALQGEVQMTLQPSAWLPVSTKHNAGEPPSKDSPLVAMAGIGNPQRFFDTLAQQGYQVEHTQTFDDHSAYSESVLNELASGRMLVMTEKDAVKCRDFAKDNWWYLAVDAKLSASFDQQLLAKIDRLVADK.

58 to 65 (TVGGSGKT) is a binding site for ATP.

Belongs to the LpxK family.

It catalyses the reaction a lipid A disaccharide + ATP = a lipid IVA + ADP + H(+). It participates in glycolipid biosynthesis; lipid IV(A) biosynthesis; lipid IV(A) from (3R)-3-hydroxytetradecanoyl-[acyl-carrier-protein] and UDP-N-acetyl-alpha-D-glucosamine: step 6/6. In terms of biological role, transfers the gamma-phosphate of ATP to the 4'-position of a tetraacyldisaccharide 1-phosphate intermediate (termed DS-1-P) to form tetraacyldisaccharide 1,4'-bis-phosphate (lipid IVA). In Shewanella halifaxensis (strain HAW-EB4), this protein is Tetraacyldisaccharide 4'-kinase.